Consider the following 296-residue polypeptide: Maltose/maltodextrin transport system permease protein MalG (296 aa).

Residues 1-12 (MAMVQPKSQKAR) lie on the Cytoplasmic side of the membrane. Residues 13–35 (LFITHLLLLLFIAAIMFPLLMVV) form a helical membrane-spanning segment. The Periplasmic portion of the chain corresponds to 36–88 (AISLRQGNFATGSLIPEQISWDHWKLALGFSVEQADGRITPPPFPVLLWLWNS). The 197-residue stretch at 85–281 (LWNSVKVAGI…LPITIVFLLA (197 aa)) folds into the ABC transmembrane type-1 domain. Residues 89-111 (VKVAGISAIGIVALSTTCAYAFA) traverse the membrane as a helical segment. Topologically, residues 112 to 123 (RMRFPGKATLLK) are cytoplasmic. The helical transmembrane segment at 124-143 (GMLIFQMFPAVLSLVALYAL) threads the bilayer. At 144 to 152 (FDRLGEYIP) the chain is on the periplasmic side. Residues 153–175 (FIGLNTHGGVIFAYLGGIALHVW) form a helical membrane-spanning segment. The Cytoplasmic portion of the chain corresponds to 176–204 (TIKGYFETIDSSLEEAAALDGATPWQAFR). A helical transmembrane segment spans residues 205–227 (LVLLPLSVPILAVVFILSFIAAI). Topologically, residues 228-257 (TEVPVASLLLRDVNSYTLAVGMQQYLNPQN) are periplasmic. Residues 258 to 280 (YLWGDFAAAAVMSALPITIVFLL) traverse the membrane as a helical segment. Over 281–296 (AQRWLVNGLTAGGVKG) the chain is Cytoplasmic.

Belongs to the binding-protein-dependent transport system permease family. MalFG subfamily. In terms of assembly, the complex is composed of two ATP-binding proteins (MalK), two transmembrane proteins (MalG and MalF) and a solute-binding protein (MalE).

The protein resides in the cell inner membrane. Part of the ABC transporter complex MalEFGK involved in maltose/maltodextrin import. Probably responsible for the translocation of the substrate across the membrane. In Escherichia coli O157:H7, this protein is Maltose/maltodextrin transport system permease protein MalG (malG).